Consider the following 65-residue polypeptide: Protein TrbD (65 aa).

This Escherichia coli (strain K12) protein is Protein TrbD (trbD).